A 292-amino-acid chain; its full sequence is General transcription factor IIE subunit 2 (292 aa).

Met1 bears the N-acetylmethionine mark. The disordered stretch occupies residues 17-64 (LSTPVVEKRAVPSESPSSSSSKKKKAKVEHGGSSGSKQNSDHNNGSFN). Positions 51–63 (GSKQNSDHNNGSF) are enriched in polar residues. Phosphoserine is present on Ser62. Residues 67-147 (ALSGSSGYKF…YAFKPKYNLK (81 aa)) constitute a DNA-binding region (TFIIE beta). Lys75 is subject to N6-acetyllysine. The tract at residues 245–277 (SMQESGPKKVASIQRRKKPASQKKRRFKTHNEH) is disordered. Over residues 258–272 (QRRKKPASQKKRRFK) the composition is skewed to basic residues.

Belongs to the TFIIE beta subunit family. In terms of assembly, tetramer of two alpha and two beta chains. Interacts with FACT subunit SUPT16H. Interacts with ATF7IP. Interacts with SND1. Part of TBP-based Pol II pre-initiation complex (PIC), in which Pol II core assembles with general transcription factors and other specific initiation factors including GTF2E1, GTF2E2, GTF2F1, GTF2F2, TCEA1, ERCC2, ERCC3, GTF2H2, GTF2H3, GTF2H4, GTF2H5, GTF2A1, GTF2A2, GTF2B and TBP; this large multi-subunit PIC complex mediates DNA unwinding and targets Pol II core to the transcription start site where the first phosphodiester bond forms.

The protein resides in the nucleus. In terms of biological role, recruits TFIIH to the initiation complex and stimulates the RNA polymerase II C-terminal domain kinase and DNA-dependent ATPase activities of TFIIH. Both TFIIH and TFIIE are required for promoter clearance by RNA polymerase. The polypeptide is General transcription factor IIE subunit 2 (Gtf2e2) (Mus musculus (Mouse)).